Here is a 786-residue protein sequence, read N- to C-terminus: Cadherin-9 (786 aa).

Residues 1-21 (MRTYSCLQLVIWTCIFHMVDN) form the signal peptide. The N-linked (GlcNAc...) asparagine glycan is linked to Asn-21. Positions 22 to 52 (STLQGKDSSHFLRRIVNLKKDEGKMLHRAKR) are excised as a propeptide. Residues 22–614 (STLQGKDSSH…MLAAGLSTGA (593 aa)) are Extracellular-facing. 5 consecutive Cadherin domains span residues 54 to 158 (WMWN…EPKF), 159 to 267 (TKDL…PPRF), 268 to 382 (PQST…PPVF), 383 to 487 (SKLS…APEF), and 487 to 604 (FATY…AEAL). An N-linked (GlcNAc...) asparagine glycan is attached at Asn-254. N-linked (GlcNAc...) asparagine glycosylation is found at Asn-454 and Asn-535. The chain crosses the membrane as a helical span at residues 615-635 (LIAILLCVVILLTLIVLFAAL). The Cytoplasmic portion of the chain corresponds to 636–786 (KRQRKKEPLI…AEMYGGNDSD (151 aa)). Ser-785 carries the phosphoserine modification.

The protein localises to the cell membrane. Cadherins are calcium-dependent cell adhesion proteins. They preferentially interact with themselves in a homophilic manner in connecting cells; cadherins may thus contribute to the sorting of heterogeneous cell types. This is Cadherin-9 (Cdh9) from Mus musculus (Mouse).